The following is a 146-amino-acid chain: 3-dehydroquinate dehydratase (146 aa).

Catalysis depends on Tyr-23, which acts as the Proton acceptor. The substrate site is built by Asn-74, His-80, and Asp-87. The Proton donor role is filled by His-100. Substrate contacts are provided by residues 101–102 (IS) and Arg-111.

It belongs to the type-II 3-dehydroquinase family. As to quaternary structure, homododecamer.

It catalyses the reaction 3-dehydroquinate = 3-dehydroshikimate + H2O. Its pathway is metabolic intermediate biosynthesis; chorismate biosynthesis; chorismate from D-erythrose 4-phosphate and phosphoenolpyruvate: step 3/7. Catalyzes a trans-dehydration via an enolate intermediate. In Bacillus cereus (strain G9842), this protein is 3-dehydroquinate dehydratase.